The following is a 341-amino-acid chain: uncharacterized protein (341 aa).

Residues 125–146 (DTVKHNGSGPRPEQASSHVHYS) are disordered.

The protein belongs to the cycloisomerase 2 family.

This is an uncharacterized protein from Lactococcus lactis subsp. cremoris (strain MG1363).